A 326-amino-acid polypeptide reads, in one-letter code: Tetraacyldisaccharide 4'-kinase (326 aa).

55 to 62 (TAGGNGKT) is an ATP binding site.

The protein belongs to the LpxK family.

The enzyme catalyses a lipid A disaccharide + ATP = a lipid IVA + ADP + H(+). Its pathway is glycolipid biosynthesis; lipid IV(A) biosynthesis; lipid IV(A) from (3R)-3-hydroxytetradecanoyl-[acyl-carrier-protein] and UDP-N-acetyl-alpha-D-glucosamine: step 6/6. Its function is as follows. Transfers the gamma-phosphate of ATP to the 4'-position of a tetraacyldisaccharide 1-phosphate intermediate (termed DS-1-P) to form tetraacyldisaccharide 1,4'-bis-phosphate (lipid IVA). This chain is Tetraacyldisaccharide 4'-kinase, found in Erwinia tasmaniensis (strain DSM 17950 / CFBP 7177 / CIP 109463 / NCPPB 4357 / Et1/99).